We begin with the raw amino-acid sequence, 436 residues long: Adenylosuccinate synthetase (436 aa).

Residues 21-27 and 49-51 each bind GTP; these read GDEGKGK and GHT. D22 (proton acceptor) is an active-site residue. Mg(2+) is bound by residues D22 and G49. Residues 22–25, 47–50, T135, R149, Q230, T245, and R309 each bind IMP; these read DEGK and NAGH. The active-site Proton donor is H50. 305–311 provides a ligand contact to substrate; it reads TTTGRPR. Residues R311, 337 to 339, and 423 to 425 each bind GTP; these read KVD and SSG.

The protein belongs to the adenylosuccinate synthetase family. As to quaternary structure, homodimer. Mg(2+) serves as cofactor.

The protein resides in the cytoplasm. It carries out the reaction IMP + L-aspartate + GTP = N(6)-(1,2-dicarboxyethyl)-AMP + GDP + phosphate + 2 H(+). It participates in purine metabolism; AMP biosynthesis via de novo pathway; AMP from IMP: step 1/2. Its function is as follows. Plays an important role in the de novo pathway of purine nucleotide biosynthesis. Catalyzes the first committed step in the biosynthesis of AMP from IMP. The polypeptide is Adenylosuccinate synthetase (Thermoplasma volcanium (strain ATCC 51530 / DSM 4299 / JCM 9571 / NBRC 15438 / GSS1)).